The following is a 341-amino-acid chain: Inositol 2-dehydrogenase (341 aa).

The protein belongs to the Gfo/Idh/MocA family. In terms of assembly, homotetramer.

It catalyses the reaction myo-inositol + NAD(+) = scyllo-inosose + NADH + H(+). In terms of biological role, involved in the oxidation of myo-inositol (MI) to 2-keto-myo-inositol (2KMI or 2-inosose). This is Inositol 2-dehydrogenase from Acidothermus cellulolyticus (strain ATCC 43068 / DSM 8971 / 11B).